We begin with the raw amino-acid sequence, 76 residues long: Small ribosomal subunit protein bS18 (76 aa).

It belongs to the bacterial ribosomal protein bS18 family. Part of the 30S ribosomal subunit. Forms a tight heterodimer with protein bS6.

Its function is as follows. Binds as a heterodimer with protein bS6 to the central domain of the 16S rRNA, where it helps stabilize the platform of the 30S subunit. The polypeptide is Small ribosomal subunit protein bS18 (Petrotoga mobilis (strain DSM 10674 / SJ95)).